A 158-amino-acid chain; its full sequence is MQRYPMTPQGHAALEAELKQLKSVDRPRITAAIAEAREHGDLKENAEYHAAREQQGFCEARIRDIEAKLSGAQVIDPATLPREGRVVFGVTVVIENLDTEEQKRYQIVGDDEADFKNNKISVNSPIARGLIGKSEGDEARIETPSGLVEFEIIEVIYQ.

Belongs to the GreA/GreB family.

Necessary for efficient RNA polymerase transcription elongation past template-encoded arresting sites. The arresting sites in DNA have the property of trapping a certain fraction of elongating RNA polymerases that pass through, resulting in locked ternary complexes. Cleavage of the nascent transcript by cleavage factors such as GreA or GreB allows the resumption of elongation from the new 3'terminus. GreA releases sequences of 2 to 3 nucleotides. The protein is Transcription elongation factor GreA of Psychrobacter sp. (strain PRwf-1).